The primary structure comprises 334 residues: MDQTLIQEILEIVEQAAIASASLSGKGLKDEADALAVDAMRKRMNQIQMQGRIVIGEGERDEAPMLYIGEEVGTGTGPGVDFAVDPCEGTNLCAFNQRGSMAVLAASDRGGLFNAPDFYMKKLAAPPAAKGKVDIRKSATENIKILSECLGLPVDELNIVVMDRARHKDLIAEIRGTGARIQPISDGDVQAAIACGFAGTGTHCLMGIGAAPEGVISAAAMRALGGHFQGQLVYDPAIAQTSEWADMTKEGNLARLAEMGIADPDKVYEAEELACGEHVCFAGSGITDGLLFNGVKFEKDCTRTSSLVISNLDNTCRFTNTVHIKEDAQSIALS.

The Mn(2+) site is built by Asp33, Glu57, Asp85, and Glu88. Residues 88 to 90, Tyr119, 164 to 166, and 186 to 188 contribute to the substrate site; these read EGT, RAR, and DGD. Position 213 (Glu213) interacts with Mn(2+).

This sequence belongs to the FBPase class 2 family. As to quaternary structure, homotetramer. Requires Mn(2+) as cofactor.

The catalysed reaction is beta-D-fructose 1,6-bisphosphate + H2O = beta-D-fructose 6-phosphate + phosphate. It carries out the reaction D-sedoheptulose 1,7-bisphosphate + H2O = D-sedoheptulose 7-phosphate + phosphate. The protein operates within carbohydrate biosynthesis; Calvin cycle. Functionally, catalyzes the hydrolysis of fructose 1,6-bisphosphate (Fru 1,6-P2) and sedoheptulose 1,7-bisphosphate (Sed 1,7-P2) to fructose 6-phosphate and sedoheptulose 7-phosphate, respectively. This Synechococcus sp. (strain CC9605) protein is D-fructose 1,6-bisphosphatase class 2/sedoheptulose 1,7-bisphosphatase.